The following is a 716-amino-acid chain: Radial spoke head protein 4 homolog A (716 aa).

Disordered regions lie at residues 1 to 164 (MEDS…CGRR), 375 to 410 (EGEDEEEVEEEDVAEERDNGESEAHEDEEDELPKSF), 506 to 526 (GEEEGEEEEEAEGGRNSFEEN), and 697 to 716 (LLAAENEESEEDEDEEDDYD). The span at 8 to 25 (KQEKENQEELGETRRPWE) shows a compositional bias: basic and acidic residues. Low complexity-rich tracts occupy residues 29–42 (AASPQYSEPESSEP), 54–66 (QSRSSRPWSPQSR), and 80–100 (SSPAPVSPREPSSSPSPLAPA). Residues 140-156 (HHTSQSEGNTFQQSQQP) show a composition bias toward polar residues. Positions 375–389 (EGEDEEEVEEEDVAE) are enriched in acidic residues. Position 396 is a phosphoserine (Ser396). 2 stretches are compositionally biased toward acidic residues: residues 506–516 (GEEEGEEEEEA) and 701–716 (ENEESEEDEDEEDDYD).

This sequence belongs to the flagellar radial spoke RSP4/6 family. As to quaternary structure, interacts with RSPH6A. Expressed in trachea, lungs, and testes. Very strong expression is detected in nasal brushings.

The protein resides in the cytoplasm. It localises to the cytoskeleton. The protein localises to the cilium axoneme. Its subcellular location is the cell projection. It is found in the cilium. Its function is as follows. Component of the axonemal radial spoke head which plays an important role in ciliary motility. Essential for triplet radial spokes (RS1, RS2 and RS3) head assembly in the motile cilia. The polypeptide is Radial spoke head protein 4 homolog A (RSPH4A) (Homo sapiens (Human)).